Consider the following 223-residue polypeptide: Deoxyribose-phosphate aldolase (223 aa).

D89 acts as the Proton donor/acceptor in catalysis. K152 (schiff-base intermediate with acetaldehyde) is an active-site residue. The Proton donor/acceptor role is filled by K181.

It belongs to the DeoC/FbaB aldolase family. DeoC type 1 subfamily.

The protein resides in the cytoplasm. It carries out the reaction 2-deoxy-D-ribose 5-phosphate = D-glyceraldehyde 3-phosphate + acetaldehyde. The protein operates within carbohydrate degradation; 2-deoxy-D-ribose 1-phosphate degradation; D-glyceraldehyde 3-phosphate and acetaldehyde from 2-deoxy-alpha-D-ribose 1-phosphate: step 2/2. Functionally, catalyzes a reversible aldol reaction between acetaldehyde and D-glyceraldehyde 3-phosphate to generate 2-deoxy-D-ribose 5-phosphate. The chain is Deoxyribose-phosphate aldolase from Bacillus cereus (strain ATCC 10987 / NRS 248).